The following is a 341-amino-acid chain: Elongation factor Ts (341 aa).

Residues 80-83 (TDFV) form an involved in Mg(2+) ion dislocation from EF-Tu region.

This sequence belongs to the EF-Ts family.

It localises to the cytoplasm. Its function is as follows. Associates with the EF-Tu.GDP complex and induces the exchange of GDP to GTP. It remains bound to the aminoacyl-tRNA.EF-Tu.GTP complex up to the GTP hydrolysis stage on the ribosome. This chain is Elongation factor Ts, found in Lactobacillus helveticus (strain DPC 4571).